The chain runs to 95 residues: Aspartyl/glutamyl-tRNA(Asn/Gln) amidotransferase subunit C (95 aa).

This sequence belongs to the GatC family. Heterotrimer of A, B and C subunits.

It carries out the reaction L-glutamyl-tRNA(Gln) + L-glutamine + ATP + H2O = L-glutaminyl-tRNA(Gln) + L-glutamate + ADP + phosphate + H(+). It catalyses the reaction L-aspartyl-tRNA(Asn) + L-glutamine + ATP + H2O = L-asparaginyl-tRNA(Asn) + L-glutamate + ADP + phosphate + 2 H(+). Allows the formation of correctly charged Asn-tRNA(Asn) or Gln-tRNA(Gln) through the transamidation of misacylated Asp-tRNA(Asn) or Glu-tRNA(Gln) in organisms which lack either or both of asparaginyl-tRNA or glutaminyl-tRNA synthetases. The reaction takes place in the presence of glutamine and ATP through an activated phospho-Asp-tRNA(Asn) or phospho-Glu-tRNA(Gln). The chain is Aspartyl/glutamyl-tRNA(Asn/Gln) amidotransferase subunit C from Bartonella quintana (strain Toulouse) (Rochalimaea quintana).